Here is a 139-residue protein sequence, read N- to C-terminus: NADPH-dependent 7-cyano-7-deazaguanine reductase (139 aa).

Cys34 serves as the catalytic Thioimide intermediate. Asp41 serves as the catalytic Proton donor. Substrate is bound by residues 56–58 and 75–76; these read VEL and HE.

The protein belongs to the GTP cyclohydrolase I family. QueF type 1 subfamily.

It localises to the cytoplasm. It carries out the reaction 7-aminomethyl-7-carbaguanine + 2 NADP(+) = 7-cyano-7-deazaguanine + 2 NADPH + 3 H(+). It functions in the pathway tRNA modification; tRNA-queuosine biosynthesis. Catalyzes the NADPH-dependent reduction of 7-cyano-7-deazaguanine (preQ0) to 7-aminomethyl-7-deazaguanine (preQ1). The chain is NADPH-dependent 7-cyano-7-deazaguanine reductase from Methylobacillus flagellatus (strain ATCC 51484 / DSM 6875 / VKM B-1610 / KT).